The primary structure comprises 403 residues: Tryptophan synthase beta chain 1 (403 aa).

An N6-(pyridoxal phosphate)lysine modification is found at Lys-93.

The protein belongs to the TrpB family. In terms of assembly, tetramer of two alpha and two beta chains. The cofactor is pyridoxal 5'-phosphate.

It catalyses the reaction (1S,2R)-1-C-(indol-3-yl)glycerol 3-phosphate + L-serine = D-glyceraldehyde 3-phosphate + L-tryptophan + H2O. It functions in the pathway amino-acid biosynthesis; L-tryptophan biosynthesis; L-tryptophan from chorismate: step 5/5. In terms of biological role, the beta subunit is responsible for the synthesis of L-tryptophan from indole and L-serine. The sequence is that of Tryptophan synthase beta chain 1 (trpB1) from Methanosarcina acetivorans (strain ATCC 35395 / DSM 2834 / JCM 12185 / C2A).